The primary structure comprises 196 residues: MALTFNRRNDRTESSEFEEKMLFVNRTSKTYQGGRRFRFAALVILGDRNGRVGMGIGKAKEVPVAIEKAKAVARKNMITVPVENGTIPHEIVGENSTSRVLLKPAGPGTGVIAGTVPRSIAELAGITNMLSKELGSRNKVNVAYAVFDGFKNLRTAKQVRNLRGTEVRPSLSSDSPAGRSATTEAGEGVADTGGMQ.

The region spanning 17-80 (FEEKMLFVNR…AVARKNMITV (64 aa)) is the S5 DRBM domain. Positions 164-196 (GTEVRPSLSSDSPAGRSATTEAGEGVADTGGMQ) are disordered. Residues 170–183 (SLSSDSPAGRSATT) show a composition bias toward polar residues.

The protein belongs to the universal ribosomal protein uS5 family. As to quaternary structure, part of the 30S ribosomal subunit. Contacts proteins S4 and S8.

Functionally, with S4 and S12 plays an important role in translational accuracy. In terms of biological role, located at the back of the 30S subunit body where it stabilizes the conformation of the head with respect to the body. This Deinococcus radiodurans (strain ATCC 13939 / DSM 20539 / JCM 16871 / CCUG 27074 / LMG 4051 / NBRC 15346 / NCIMB 9279 / VKM B-1422 / R1) protein is Small ribosomal subunit protein uS5.